The primary structure comprises 123 residues: MARIAGVDLPKNKRMDIALTYIFGIGRTTALRILESTGVDWTKNSDALTSEETNNIRKELEANYKVEGDLRREITAGIKRLMDIGCYRGLRHRRGLPCRGQRTHTNSRTRKGPRRGVMAKKKK.

The disordered stretch occupies residues 97-123 (PCRGQRTHTNSRTRKGPRRGVMAKKKK).

Belongs to the universal ribosomal protein uS13 family. Part of the 30S ribosomal subunit. Forms a loose heterodimer with protein S19. Forms two bridges to the 50S subunit in the 70S ribosome.

Functionally, located at the top of the head of the 30S subunit, it contacts several helices of the 16S rRNA. In the 70S ribosome it contacts the 23S rRNA (bridge B1a) and protein L5 of the 50S subunit (bridge B1b), connecting the 2 subunits; these bridges are implicated in subunit movement. Contacts the tRNAs in the A and P-sites. The sequence is that of Small ribosomal subunit protein uS13 from Solidesulfovibrio magneticus (strain ATCC 700980 / DSM 13731 / RS-1) (Desulfovibrio magneticus).